The chain runs to 780 residues: Myosin heavy chain kinase C (780 aa).

In terms of domain architecture, Alpha-type protein kinase spans 40-243 (IGDDLKPKWT…VCDFLKLKPI (204 aa)). Positions 310 to 495 (RIRAQQQQKS…MEQTPDRSEF (186 aa)) are disordered. A compositionally biased stretch (low complexity) spans 337–350 (QQSPSSPTSKPVPQ). Residues 353 to 376 (KTPSQSNVVNKSPVSPPKENSNVK) show a composition bias toward polar residues. Residues 380–436 (DNINNNNSSISSNNDNSNNNNNNNDNINNSSNSSSVNSNSSSVSSSSSSSSSSSSSS) are compositionally biased toward low complexity. Over residues 437-450 (TTNAAPISIQVSRN) the composition is skewed to polar residues. Positions 458–488 (IQPSSAAASASSTSSSNVPTPESTSTSSMEQ) are enriched in low complexity. WD repeat units lie at residues 507 to 546 (DTVRGLQSECITGDSLRLYSGSNDGQIGVWDAVELKHVTN), 549 to 589 (AHGK…TIKE), 591 to 628 (KESNEVNTIFIQDNLLYTGCNDKTVKVWDMRSYECVKT), 631 to 668 (GHTRAIKSVCAMGNLLFSGSNDQQIYVWNLATGTILTN), 671 to 708 (GHEGWVKTLYAHNNMLYSGSHDETIRIWDLKTTRCVNT), and 748 to 780 (NTRSSILCLWRNQNQLFTGSLASNLKVWSWDKM).

Belongs to the protein kinase superfamily. Alpha-type protein kinase family. ALPK subfamily. In terms of assembly, interacts with myosin II heavy chain (mhcA). In terms of processing, autophosphorylated in vitro.

Its subcellular location is the cytoplasm. The protein resides in the cell cortex. It localises to the membrane. It is found in the cleavage furrow. It carries out the reaction L-threonyl-[myosin heavy-chain] + ATP = O-phospho-L-threonyl-[myosin heavy-chain] + ADP + H(+). In terms of biological role, phosphorylates threonine at 'Thr-1823', 'Thr-1833' and 'Thr-2029' in the C-terminal tail region of myosin II heavy chain (mhcA). This phosphorylation is critical in actin-activated ATPase activity of the myosin and regulating the assembly and disassembly of myosin II filament. In vitro, catalytic domain phosphorylates mhcA, myelin basic protein, myosin regulatory light chain, casein and caldesmon. Drives the disassembly of myosin II filaments for efficient cytokinesis and recycling of myosin II that occurs during late cytokinesis. Can be activated in vitro by autophosphorylation. This chain is Myosin heavy chain kinase C (mhkC), found in Dictyostelium discoideum (Social amoeba).